The following is a 455-amino-acid chain: UDP-N-acetylmuramoylalanine--D-glutamate ligase (455 aa).

119–125 (GTNGKTT) lines the ATP pocket.

Belongs to the MurCDEF family.

It localises to the cytoplasm. The catalysed reaction is UDP-N-acetyl-alpha-D-muramoyl-L-alanine + D-glutamate + ATP = UDP-N-acetyl-alpha-D-muramoyl-L-alanyl-D-glutamate + ADP + phosphate + H(+). The protein operates within cell wall biogenesis; peptidoglycan biosynthesis. Its function is as follows. Cell wall formation. Catalyzes the addition of glutamate to the nucleotide precursor UDP-N-acetylmuramoyl-L-alanine (UMA). This Listeria monocytogenes serovar 1/2a (strain ATCC BAA-679 / EGD-e) protein is UDP-N-acetylmuramoylalanine--D-glutamate ligase.